The chain runs to 389 residues: UDP-D-apiose/UDP-D-xylose synthase 2 (389 aa).

NAD(+) contacts are provided by Phe28, Ile29, Asp49, Asn76, Ile77, and Leu96. The UDP-alpha-D-glucuronate site is built by Tyr105, Thr139, Glu141, Arg182, and Tyr185. NAD(+)-binding residues include Tyr185 and Lys189. Tyr185 (proton acceptor) is an active-site residue. Asn214 provides a ligand contact to UDP-alpha-D-glucuronate. 2 residues coordinate NAD(+): Trp215 and Arg235. The UDP-alpha-D-glucuronate site is built by Lys251, Val253, Arg260, Tyr331, Tyr335, Asp337, and Arg341.

Belongs to the NAD(P)-dependent epimerase/dehydratase family. In terms of assembly, homodimer and heterodimer with AXS1. NAD(+) serves as cofactor. In terms of tissue distribution, widely expressed with stronger expression in dark-grown seedlings, leaves and stems, and lower levels in flowers, siliques, pistils, pollen and roots.

Its subcellular location is the cytoplasm. It catalyses the reaction UDP-alpha-D-glucuronate + H(+) = UDP-alpha-D-xylose + CO2. The enzyme catalyses UDP-alpha-D-glucuronate + H(+) = UDP-alpha-D-apiose + CO2. Its function is as follows. Together with AXS1, catalyzes the conversion of UDP-D-glucuronate into a mixture of UDP-D-apiose (UDP-Api) as the main product and UDP-D-xylose to a lesser extent, via a cycle of oxidation and reduction. D-Apiose (3-C-hydroxymethyl-d-erythrose) is the only plant cell wall monosaccharide with a branched carbon skeleton and is found in rhamnogalacturonan II (RG-II), apiogalacturonan, and several apioglycosides. The polypeptide is UDP-D-apiose/UDP-D-xylose synthase 2 (Arabidopsis thaliana (Mouse-ear cress)).